The chain runs to 127 residues: MASNTTFLFSTVTLLIILLNTTVSGRDLPAESSTNIAARLQSGGLMECWNALYELKSCTNEIVLFFLNGETKLGVSCCESVDIITTNCWPAMLTSLGFTPEEANVLRGFCQNPNSGDSSPAPSPKIV.

The N-terminal stretch at 1–25 (MASNTTFLFSTVTLLIILLNTTVSG) is a signal peptide.

This sequence belongs to the plant egg cell-secreted peptide family. As to expression, restricted to female reproductive tissues, specifically accumulating in storage vesicles of the unfertilized egg cell.

It is found in the cytoplasmic vesicle. The protein localises to the secreted. Functionally, involved in the regulation of gamete interactions during the double fertilization and to prevent multiple-pollen tube attraction; mediates the redistribution of the gamete fusogen HAP2/GCS1 to the cell surface after secretion upon sperm arrival. The protein is Egg cell-secreted protein 1.4 (EC1.4) of Arabidopsis thaliana (Mouse-ear cress).